Reading from the N-terminus, the 269-residue chain is MSVLESIIDGVREDLAVRESTIPFDEIKQRSAAAPPPRDVMAALHAPGVGVIAEVKRRSPSKGELADIAEPAELAADYAAAGARVISVLTEQRRFGGSLADFDAVRAKVSAPLLRKDFIVSPYQVHEARAHGADMVLLIVAALEQVALEALLDRVESLGMTALVEVHTAEEADRALEAGAKVIGINARNLHTLEVDRDVFGRIAPGLPVEVLKVAESGVRGPSDLMAYAGSGADAVLVGEGLVTSDNPRTAVTQLVTAGSHPACPRPSR.

Belongs to the TrpC family.

It carries out the reaction 1-(2-carboxyphenylamino)-1-deoxy-D-ribulose 5-phosphate + H(+) = (1S,2R)-1-C-(indol-3-yl)glycerol 3-phosphate + CO2 + H2O. The protein operates within amino-acid biosynthesis; L-tryptophan biosynthesis; L-tryptophan from chorismate: step 4/5. This Saccharopolyspora erythraea (strain ATCC 11635 / DSM 40517 / JCM 4748 / NBRC 13426 / NCIMB 8594 / NRRL 2338) protein is Indole-3-glycerol phosphate synthase.